The chain runs to 406 residues: NIPA-like protein 3 (406 aa).

The next 4 helical transmembrane spans lie at 33–53, 76–96, 101–121, and 135–155; these read NLIGALLAIFGHLVVSIALNL, WWLGLFLMLLGELGVFASYAF, LIVPLSAVSVIASAIIGIIFI, and ILSFVGCGLAVVGTYLLVTFA. N-linked (GlcNAc...) asparagine glycosylation is present at Asn-166. 5 helical membrane passes run 171-191, 202-222, 240-260, 271-291, and 300-320; these read LVSWPFLLYMLVEIILFCLLL, IVVILLLVALLGSMTVVTVKA, PIFYVMFVCMVATAVYQAAFL, LIASVGYILSTTIAITAGAIF, and VLHICMFALGCLIAFLGVFLI. Residue Ser-372 is modified to Phosphoserine.

This sequence belongs to the NIPA family.

It localises to the membrane. In Pongo abelii (Sumatran orangutan), this protein is NIPA-like protein 3 (NIPAL3).